A 546-amino-acid chain; its full sequence is Parathyroid hormone 2 receptor (546 aa).

The signal sequence occupies residues 1-24; the sequence is MAWLETFTYICGWLILSSCLLVRA. Over 27–143 the chain is Extracellular; that stretch reads DSDGTITIEE…GKQEFFESLY (117 aa). N51, N106, N116, and N121 each carry an N-linked (GlcNAc...) asparagine glycan. The helical transmembrane segment at 144–167 threads the bilayer; the sequence is ILYTVGYSISFGSLAVAILIIGYF. The Cytoplasmic portion of the chain corresponds to 168–174; it reads RRLHCTR. Residues 175 to 194 traverse the membrane as a helical segment; the sequence is NYIHLHLFVSFMLRAMSIFV. Residues 195 to 235 are Extracellular-facing; that stretch reads KDRVAQAHLGVEALQSLVMQGDLQNFIGGPSVDKSQYVGCK. Residues 236 to 258 form a helical membrane-spanning segment; it reads IAVVMFIYFLATNYYWILVEGLY. Topologically, residues 259 to 273 are cytoplasmic; sequence LHNLIFVSFFSDTKY. A helical transmembrane segment spans residues 274–295; the sequence is LWGFISIGWGFPAVFVVAWAVA. The Extracellular portion of the chain corresponds to 296 to 313; it reads RATLADTRCWELSAGDRW. Residues 314 to 334 form a helical membrane-spanning segment; sequence IYQAPILAAIGLNFILFLNTV. The Cytoplasmic segment spans residues 335-361; it reads RVLATKIWETNAVGHDMRKQYRKLAKS. The helical transmembrane segment at 362 to 380 threads the bilayer; sequence TLVLVLVFGVHYIVFVCQP. The Extracellular segment spans residues 381–391; sequence HSFSGLWWEIR. Residues 392 to 414 form a helical membrane-spanning segment; sequence MHCELFFNSFQGFFVSIVYCYCN. Topologically, residues 415–546 are cytoplasmic; the sequence is GEVQAEVKKM…EGCKGETHPI (132 aa). The interval 497–546 is disordered; the sequence is SEQDCQTHSPPEETKEGHRRQGDDSPVMESSRPVAFTLDTEGCKGETHPI. Composition is skewed to basic and acidic residues over residues 506-519 and 537-546; these read PPEE…RQGD and EGCKGETHPI.

This sequence belongs to the G-protein coupled receptor 2 family. As to quaternary structure, binds to TIPF39/TIP39.

The protein resides in the cell membrane. Its function is as follows. This is a specific receptor for parathyroid hormone. The activity of this receptor is mediated by G proteins which activate adenylyl cyclase. PTH2R may be responsible for PTH effects in a number of physiological systems. It may play a significant role in pancreatic function. PTH2R presence in neurons indicates that it may function as a neurotransmitter receptor. The sequence is that of Parathyroid hormone 2 receptor (Pth2r) from Mus musculus (Mouse).